The following is a 290-amino-acid chain: Ribosomal RNA small subunit methyltransferase A (290 aa).

Residues Asn-27, Leu-29, Gly-54, Glu-75, Asp-100, and Asn-125 each coordinate S-adenosyl-L-methionine.

Belongs to the class I-like SAM-binding methyltransferase superfamily. rRNA adenine N(6)-methyltransferase family. RsmA subfamily.

It is found in the cytoplasm. It carries out the reaction adenosine(1518)/adenosine(1519) in 16S rRNA + 4 S-adenosyl-L-methionine = N(6)-dimethyladenosine(1518)/N(6)-dimethyladenosine(1519) in 16S rRNA + 4 S-adenosyl-L-homocysteine + 4 H(+). Functionally, specifically dimethylates two adjacent adenosines (A1518 and A1519) in the loop of a conserved hairpin near the 3'-end of 16S rRNA in the 30S particle. May play a critical role in biogenesis of 30S subunits. The chain is Ribosomal RNA small subunit methyltransferase A from Streptococcus thermophilus (strain ATCC BAA-491 / LMD-9).